Reading from the N-terminus, the 160-residue chain is Endoribonuclease YbeY (160 aa).

H118, H122, and H128 together coordinate Zn(2+).

Belongs to the endoribonuclease YbeY family. The cofactor is Zn(2+).

The protein resides in the cytoplasm. Functionally, single strand-specific metallo-endoribonuclease involved in late-stage 70S ribosome quality control and in maturation of the 3' terminus of the 16S rRNA. The sequence is that of Endoribonuclease YbeY from Treponema pallidum (strain Nichols).